We begin with the raw amino-acid sequence, 435 residues long: Homoserine dehydrogenase (435 aa).

NADPH contacts are provided by Thr-13, Val-14, and Lys-104. Val-14 contacts NAD(+). Residues Val-14 and Lys-104 each contribute to the NADP(+) site. Na(+)-binding residues include Glu-128, Val-131, Gly-133, and Ile-135. NADP(+) is bound by residues Gly-186 and Glu-189. L-homoserine is bound by residues Glu-189 and Asp-200. Lys-204 (proton donor) is an active-site residue. An NADPH-binding site is contributed by Gly-301. Gly-301 contributes to the NAD(+) binding site. Gly-301 contacts NADP(+). Residues 354–429 (YLRVQAKDEP…CVEKPITMIR (76 aa)) form the ACT domain.

Belongs to the homoserine dehydrogenase family. As to quaternary structure, homotetramer. The cofactor is a metal cation.

It catalyses the reaction L-homoserine + NAD(+) = L-aspartate 4-semialdehyde + NADH + H(+). Its pathway is amino-acid biosynthesis; L-methionine biosynthesis via de novo pathway; L-homoserine from L-aspartate: step 3/3. The protein operates within amino-acid biosynthesis; L-threonine biosynthesis; L-threonine from L-aspartate: step 3/5. With respect to regulation, neither NaCl nor KCl increase the activity. L-threonine and L-serine do not markedly inhibit the oxidation activity. In terms of biological role, catalyzes the conversion of L-aspartate-beta-semialdehyde (L-Asa) to L-homoserine (L-Hse), the third step in the biosynthesis of threonine and methionine from aspartate. Is highly specific for NAD(+), and displays an approximate 479-fold (kcat/Km) preference for NAD(+) over NADP(+). This chain is Homoserine dehydrogenase, found in Neisseria gonorrhoeae (strain ATCC 700825 / FA 1090).